We begin with the raw amino-acid sequence, 330 residues long: Ferredoxin--NADP reductase (330 aa).

Residues E34, Q42, Y47, V87, F121, D285, and S325 each coordinate FAD.

This sequence belongs to the ferredoxin--NADP reductase type 2 family. Homodimer. The cofactor is FAD.

It carries out the reaction 2 reduced [2Fe-2S]-[ferredoxin] + NADP(+) + H(+) = 2 oxidized [2Fe-2S]-[ferredoxin] + NADPH. The chain is Ferredoxin--NADP reductase from Limosilactobacillus fermentum (strain NBRC 3956 / LMG 18251) (Lactobacillus fermentum).